Consider the following 142-residue polypeptide: Hemoglobin subunit alpha (142 aa).

Serine 1 is modified (N-acetylserine). Residues serine 1 to arginine 142 form the Globin domain. An O2-binding site is contributed by histidine 59. Residue histidine 88 participates in heme b binding.

It belongs to the globin family. Hb1 is a heterotetramer of two alpha chains and two beta chains. HbC is a heterotetramer of two alpha chains and two beta-C chains. As to expression, red blood cells.

Functionally, involved in oxygen transport from gills to the various peripheral tissues. The chain is Hemoglobin subunit alpha (hba) from Trematomus bernacchii (Emerald rockcod).